The sequence spans 259 residues: Eukaryotic translation initiation factor 3 subunit J (259 aa).

Low complexity predominate over residues Met-1–Ser-12. The tract at residues Met-1–Val-70 is sufficient for interaction with EIF3B. A disordered region spans residues Met-1–Pro-111. Phosphoserine is present on residues Ser-12, Ser-14, and Ser-21. Acidic residues predominate over residues Glu-41–Lys-60. Basic and acidic residues predominate over residues Lys-61 to Lys-107. Residues Lys-71 to Thr-136 adopt a coiled-coil conformation. A Glycyl lysine isopeptide (Lys-Gly) (interchain with G-Cter in SUMO2) cross-link involves residue Lys-107. Thr-110 carries the phosphothreonine modification. Ser-128 carries the phosphoserine modification. The segment at Ser-218–Tyr-247 is disordered. Positions Tyr-244–Met-259 are promotes stable association with the 40S ribosome. Tyr-255 is modified (phosphotyrosine).

The protein belongs to the eIF-3 subunit J family. In terms of assembly, component of the eukaryotic translation initiation factor 3 (eIF-3) complex, which is composed of 13 subunits: EIF3A, EIF3B, EIF3C, EIF3D, EIF3E, EIF3F, EIF3G, EIF3H, EIF3I, EIF3J, EIF3K, EIF3L and EIF3M. The eIF-3 complex appears to include 3 stable modules: module A is composed of EIF3A, EIF3B, EIF3G and EIF3I; module B is composed of EIF3F, EIF3H, and EIF3M; and module C is composed of EIF3C, EIF3D, EIF3E, EIF3K and EIF3L. EIF3C of module C binds EIF3B of module A and EIF3H of module B, thereby linking the three modules. EIF3J is a labile subunit that binds to the eIF-3 complex via EIF3B. The eIF-3 complex interacts with RPS6KB1 under conditions of nutrient depletion. Mitogenic stimulation leads to binding and activation of a complex composed of MTOR and RPTOR, leading to phosphorylation and release of RPS6KB1 and binding of EIF4B to eIF-3. Phosphorylated. Phosphorylation is enhanced upon serum stimulation.

The protein resides in the cytoplasm. Component of the eukaryotic translation initiation factor 3 (eIF-3) complex, which is required for several steps in the initiation of protein synthesis. The eIF-3 complex associates with the 40S ribosome and facilitates the recruitment of eIF-1, eIF-1A, eIF-2:GTP:methionyl-tRNAi and eIF-5 to form the 43S pre-initiation complex (43S PIC). The eIF-3 complex stimulates mRNA recruitment to the 43S PIC and scanning of the mRNA for AUG recognition. The eIF-3 complex is also required for disassembly and recycling of post-termination ribosomal complexes and subsequently prevents premature joining of the 40S and 60S ribosomal subunits prior to initiation. The eIF-3 complex specifically targets and initiates translation of a subset of mRNAs involved in cell proliferation, including cell cycling, differentiation and apoptosis, and uses different modes of RNA stem-loop binding to exert either translational activation or repression. This subunit binds directly within the mRNA entry channel of the 40S ribosome to the aminoacyl (A) site. It may regulate the interaction between the 43S PIC and mRNA. In Pongo abelii (Sumatran orangutan), this protein is Eukaryotic translation initiation factor 3 subunit J.